The primary structure comprises 118 residues: Large ribosomal subunit protein uL22c (118 aa).

The protein belongs to the universal ribosomal protein uL22 family. Part of the 50S ribosomal subunit.

The protein resides in the plastid. It is found in the chloroplast. In terms of biological role, this protein binds specifically to 23S rRNA. Its function is as follows. The globular domain of the protein is located near the polypeptide exit tunnel on the outside of the subunit, while an extended beta-hairpin is found that lines the wall of the exit tunnel in the center of the 70S ribosome. The sequence is that of Large ribosomal subunit protein uL22c (rpl22) from Physcomitrium patens (Spreading-leaved earth moss).